The sequence spans 100 residues: Mitochondrial import inner membrane translocase subunit Tim10 B (100 aa).

Positions 25–49 (CFQRCVPSLHHRALDAEEEACLHSC) match the Twin CX3C motif motif. Cystine bridges form between C25–C49 and C29–C45.

It belongs to the small Tim family. As to quaternary structure, component of the TIM22 complex, which core is composed of TIMM22, associated with TIMM10 (TIMM10A and/or TIMM10B), TIMM9, AGK and TIMM29.

It localises to the mitochondrion inner membrane. In terms of biological role, component of the TIM22 complex, a complex that mediates the import and insertion of multi-pass transmembrane proteins into the mitochondrial inner membrane. The TIM22 complex forms a twin-pore translocase that uses the membrane potential as the external driving force. In the TIM22 complex, it may act as a docking point for the soluble 70 kDa complex that guides the target proteins in transit through the aqueous mitochondrial intermembrane space. The polypeptide is Mitochondrial import inner membrane translocase subunit Tim10 B (Timm10b) (Rattus norvegicus (Rat)).